We begin with the raw amino-acid sequence, 321 residues long: Beta-1,3-N-acetylglucosaminyltransferase manic fringe (321 aa).

Residues 1-7 (MQCRLPR) lie on the Cytoplasmic side of the membrane. A helical; Signal-anchor for type II membrane protein membrane pass occupies residues 8–27 (GLAGALLTLLCMGLLCLRYH). The Lumenal portion of the chain corresponds to 28–321 (LNLSPQRVQE…TPWCPQLGAR (294 aa)). Arg-70 is a substrate binding site. The N-linked (GlcNAc...) asparagine glycan is linked to Asn-109. 2 disulfides stabilise this stretch: Cys-110/Cys-121 and Cys-139/Cys-202. Asp-143 is a binding site for substrate. Asp-144 is a binding site for Mn(2+). N-linked (GlcNAc...) asparagine glycosylation is present at Asn-185. Asp-232 is an active-site residue. Residue His-256 coordinates Mn(2+). The cysteines at positions 306 and 315 are disulfide-linked.

This sequence belongs to the glycosyltransferase 31 family. The cofactor is Mn(2+).

Its subcellular location is the golgi apparatus membrane. The enzyme catalyses 3-O-(alpha-L-fucosyl)-L-threonyl-[EGF-like domain protein] + UDP-N-acetyl-alpha-D-glucosamine = 3-O-(N-acetyl-beta-D-glucosaminyl-(1-&gt;3)-alpha-L-fucosyl)-L-threonyl-[EGF-like domain protein] + UDP + H(+). It catalyses the reaction 3-O-(alpha-L-fucosyl)-L-seryl-[EGF-like domain protein] + UDP-N-acetyl-alpha-D-glucosamine = 3-O-(N-acetyl-beta-D-glucosaminyl-(1-&gt;3)-alpha-L-fucosyl)-L-seryl-[EGF-like domain protein] + UDP + H(+). In terms of biological role, glycosyltransferase that initiates the elongation of O-linked fucose residues attached to EGF-like repeats in the extracellular domain of Notch molecules. Modulates NOTCH1 activity by modifying O-fucose residues at specific EGF-like domains resulting in inhibition of NOTCH1 activation by JAG1 and enhancement of NOTCH1 activation by DLL1 via an increase in its binding to DLL1. In Pan troglodytes (Chimpanzee), this protein is Beta-1,3-N-acetylglucosaminyltransferase manic fringe (MFNG).